The primary structure comprises 420 residues: Reticulon-4 receptor-like 2 (420 aa).

The signal sequence occupies residues Met1–Ser30. Disulfide bonds link Cys31/Cys37 and Cys35/Cys46. Residues Cys31–Pro60 form the LRRNT domain. Asn50 carries N-linked (GlcNAc...) asparagine glycosylation. 8 LRR repeats span residues Ser61–Pro82, Asn83–His104, Ala107–Gly129, Arg132–Gly153, Ser156–Asp177, Asn180–Gly201, Ser204–Gly225, and Arg228–Asp249. An N-linked (GlcNAc...) asparagine glycan is attached at Asn93. N-linked (GlcNAc...) asparagine glycosylation occurs at Asn236. The LRRCT domain maps to Asn261–Pro312. Cystine bridges form between Cys265-Cys288 and Cys267-Cys310. Positions Val286–Pro399 are disordered. Residues Arg294–Asp306 are compositionally biased toward basic and acidic residues. Positions Pro315–Ser327 are important for interaction with MAG. The segment covering Leu351–Gln360 has biased composition (basic and acidic residues). Gly398 carries the GPI-anchor amidated glycine lipid modification. The propeptide at Pro399–Leu420 is removed in mature form.

This sequence belongs to the Nogo receptor family. In terms of assembly, interaction with MAG is controversial, and may be indirect. Interacts with MAG. Does not interact with OMG and RTN4. Undergoes zinc metalloproteinase-mediated ectodomain shedding in neuroblastoma cells; is released both as a full-length ectodomain and an N-terminal fragment containing the leucine-rich repeat (LRR) region of the protein. In terms of processing, N-glycosylated. As to expression, detected in brain. Detected in hippocampus neurons (at protein level).

It localises to the cell membrane. The protein localises to the membrane raft. The protein resides in the cell projection. Its subcellular location is the dendrite. It is found in the axon. It localises to the perikaryon. In terms of biological role, cell surface receptor that plays a functionally redundant role in the inhibition of neurite outgrowth mediated by MAG. Plays a functionally redundant role in postnatal brain development. Contributes to normal axon migration across the brain midline and normal formation of the corpus callosum. Does not seem to play a significant role in regulating axon regeneration in the adult central nervous system. Protects motoneurons against apoptosis; protection against apoptosis is probably mediated by MAG. Like other family members, plays a role in restricting the number dendritic spines and the number of synapses that are formed during brain development. Signaling mediates activation of Rho and downstream reorganization of the actin cytoskeleton. The sequence is that of Reticulon-4 receptor-like 2 from Mus musculus (Mouse).